Here is a 423-residue protein sequence, read N- to C-terminus: Imidazolonepropionase (423 aa).

Residues His80 and His82 each coordinate Fe(3+). Residues His80 and His82 each contribute to the Zn(2+) site. Residues Arg89, Tyr152, and His185 each coordinate 4-imidazolone-5-propanoate. N-formimidoyl-L-glutamate is bound at residue Tyr152. His250 is a Fe(3+) binding site. Residue His250 participates in Zn(2+) binding. 4-imidazolone-5-propanoate is bound at residue Gln253. A Fe(3+)-binding site is contributed by Asp325. Asp325 contacts Zn(2+). N-formimidoyl-L-glutamate is bound by residues Asn327 and Gly329. Position 330 (Thr330) interacts with 4-imidazolone-5-propanoate.

The protein belongs to the metallo-dependent hydrolases superfamily. HutI family. The cofactor is Zn(2+). Requires Fe(3+) as cofactor.

The protein resides in the cytoplasm. It carries out the reaction 4-imidazolone-5-propanoate + H2O = N-formimidoyl-L-glutamate. It functions in the pathway amino-acid degradation; L-histidine degradation into L-glutamate; N-formimidoyl-L-glutamate from L-histidine: step 3/3. Functionally, catalyzes the hydrolytic cleavage of the carbon-nitrogen bond in imidazolone-5-propanoate to yield N-formimidoyl-L-glutamate. It is the third step in the universal histidine degradation pathway. The chain is Imidazolonepropionase from Cupriavidus pinatubonensis (strain JMP 134 / LMG 1197) (Cupriavidus necator (strain JMP 134)).